Reading from the N-terminus, the 245-residue chain is 1-(5-phosphoribosyl)-5-[(5-phosphoribosylamino)methylideneamino] imidazole-4-carboxamide isomerase (245 aa).

The Proton acceptor role is filled by Asp-7. The active-site Proton donor is the Asp-129.

This sequence belongs to the HisA/HisF family.

It localises to the cytoplasm. The catalysed reaction is 1-(5-phospho-beta-D-ribosyl)-5-[(5-phospho-beta-D-ribosylamino)methylideneamino]imidazole-4-carboxamide = 5-[(5-phospho-1-deoxy-D-ribulos-1-ylimino)methylamino]-1-(5-phospho-beta-D-ribosyl)imidazole-4-carboxamide. It functions in the pathway amino-acid biosynthesis; L-histidine biosynthesis; L-histidine from 5-phospho-alpha-D-ribose 1-diphosphate: step 4/9. This Proteus mirabilis (strain HI4320) protein is 1-(5-phosphoribosyl)-5-[(5-phosphoribosylamino)methylideneamino] imidazole-4-carboxamide isomerase.